Consider the following 435-residue polypeptide: ATP-dependent protease ATPase subunit HslU (435 aa).

ATP contacts are provided by residues I18, 60-65 (GVGKTE), D248, E313, and R385.

Belongs to the ClpX chaperone family. HslU subfamily. In terms of assembly, a double ring-shaped homohexamer of HslV is capped on each side by a ring-shaped HslU homohexamer. The assembly of the HslU/HslV complex is dependent on binding of ATP.

Its subcellular location is the cytoplasm. ATPase subunit of a proteasome-like degradation complex; this subunit has chaperone activity. The binding of ATP and its subsequent hydrolysis by HslU are essential for unfolding of protein substrates subsequently hydrolyzed by HslV. HslU recognizes the N-terminal part of its protein substrates and unfolds these before they are guided to HslV for hydrolysis. This Rhizobium meliloti (strain 1021) (Ensifer meliloti) protein is ATP-dependent protease ATPase subunit HslU.